The following is an 89-amino-acid chain: MPYILISTQIRLETGPTMVGDEYSDPSIMNYLGARKITVLGNNFSEYHVDEPPRLVLDKLDKIGYRVVSMTGVGQTLVWCLHKESSNTL.

The protein belongs to the GFRP family. Homopentamer. Forms a complex with GCH1 where a GCH1 homodecamer is sandwiched by two GFRP homopentamers.

The protein resides in the nucleus. It is found in the nucleus membrane. The protein localises to the cytoplasm. It localises to the cytosol. Its function is as follows. Mediates tetrahydrobiopterin inhibition of GTP cyclohydrolase 1. The polypeptide is GTP cyclohydrolase 1 feedback regulatory protein (gchfr) (Danio rerio (Zebrafish)).